We begin with the raw amino-acid sequence, 95 residues long: Small ribosomal subunit protein bS6 (95 aa).

It belongs to the bacterial ribosomal protein bS6 family.

Its function is as follows. Binds together with bS18 to 16S ribosomal RNA. The protein is Small ribosomal subunit protein bS6 of Streptococcus agalactiae serotype Ia (strain ATCC 27591 / A909 / CDC SS700).